Reading from the N-terminus, the 61-residue chain is Small ribosomal subunit protein uS14 (61 aa).

Zn(2+)-binding residues include Cys-24, Cys-27, Cys-40, and Cys-43.

The protein belongs to the universal ribosomal protein uS14 family. Zinc-binding uS14 subfamily. In terms of assembly, part of the 30S ribosomal subunit. Contacts proteins S3 and S10. Zn(2+) is required as a cofactor.

Its function is as follows. Binds 16S rRNA, required for the assembly of 30S particles and may also be responsible for determining the conformation of the 16S rRNA at the A site. This chain is Small ribosomal subunit protein uS14, found in Mycoplasmopsis agalactiae (strain NCTC 10123 / CIP 59.7 / PG2) (Mycoplasma agalactiae).